We begin with the raw amino-acid sequence, 114 residues long: MSLDPAIASRLKRNEAGLFSAVAQERSTGDVLMVAWMDDEALARTLDTRKGTYYSRSRQQYWVKGETSGHTQYVHEVRLDCDGDTVLLVVDQEGAACHTGTHTCFDTDVLLAVE.

Mg(2+) is bound at residue Asp80. Cys81 contributes to the Zn(2+) binding site. Positions 82 and 84 each coordinate Mg(2+). Zn(2+) is bound by residues Cys97 and Cys104.

This sequence belongs to the PRA-CH family. As to quaternary structure, homodimer. Mg(2+) serves as cofactor. The cofactor is Zn(2+).

The protein localises to the cytoplasm. The enzyme catalyses 1-(5-phospho-beta-D-ribosyl)-5'-AMP + H2O = 1-(5-phospho-beta-D-ribosyl)-5-[(5-phospho-beta-D-ribosylamino)methylideneamino]imidazole-4-carboxamide. The protein operates within amino-acid biosynthesis; L-histidine biosynthesis; L-histidine from 5-phospho-alpha-D-ribose 1-diphosphate: step 3/9. Its function is as follows. Catalyzes the hydrolysis of the adenine ring of phosphoribosyl-AMP. In Rhodococcus jostii (strain RHA1), this protein is Phosphoribosyl-AMP cyclohydrolase.